The sequence spans 386 residues: Probable pectin lyase E (386 aa).

The signal sequence occupies residues 1–16 (MKTAVLSLFLALQTYA). Residues Cys77 and Cys101 are joined by a disulfide bond. Residue Asn124 is glycosylated (N-linked (GlcNAc...) asparagine). Arg251 is a catalytic residue. An intrachain disulfide couples Cys326 to Cys334.

It belongs to the polysaccharide lyase 1 family.

The protein localises to the secreted. It carries out the reaction Eliminative cleavage of (1-&gt;4)-alpha-D-galacturonan methyl ester to give oligosaccharides with 4-deoxy-6-O-methyl-alpha-D-galact-4-enuronosyl groups at their non-reducing ends.. Functionally, pectinolytic enzymes consist of four classes of enzymes: pectin lyase, polygalacturonase, pectin methylesterase and rhamnogalacturonase. Among pectinolytic enzymes, pectin lyase is the most important in depolymerization of pectin, since it cleaves internal glycosidic bonds of highly methylated pectins. The sequence is that of Probable pectin lyase E (pelE) from Aspergillus fumigatus (strain CBS 144.89 / FGSC A1163 / CEA10) (Neosartorya fumigata).